The primary structure comprises 154 residues: Host transcription reprogramming factor 5 (154 aa).

The signal sequence occupies residues 1 to 19 (MQILRIAQLMALLATCASA). The segment at 24 to 85 (TGSRVYSRDV…KRIKAEQNAR (62 aa)) is disordered. Over residues 35–50 (QTQGGFSGSPTTNSPD) the composition is skewed to polar residues. Basic and acidic residues predominate over residues 69–85 (ETEKERKKRIKAEQNAR). The segment at 96 to 121 (YQCPYCSDPTVFSHSDALGRHIYTIH) adopts a C2H2-type; degenerate zinc-finger fold.

The protein resides in the secreted. The protein localises to the host nucleus. Probable secreted effector that translocates into the nuclei of host cells to reprogram the expression of targeted genes by binding on effector binding elements in rice. This is Host transcription reprogramming factor 5 from Pyricularia oryzae (strain 70-15 / ATCC MYA-4617 / FGSC 8958) (Rice blast fungus).